The primary structure comprises 371 residues: Glycosyltransferase 8 domain-containing protein 1 (371 aa).

Over 1-7 the chain is Cytoplasmic; it reads MSFRKVN. Residues 8–28 form a helical; Signal-anchor for type II membrane protein membrane-spanning segment; it reads IVILVLAVALFLLVLHHNFLG. Topologically, residues 29 to 371 are lumenal; sequence LSSLLRNEVS…RRHVEISNTK (343 aa). N-linked (GlcNAc...) asparagine glycans are attached at residues Asn-103 and Asn-257.

Belongs to the glycosyltransferase 8 family.

It is found in the membrane. The sequence is that of Glycosyltransferase 8 domain-containing protein 1 (GLT8D1) from Bos taurus (Bovine).